Reading from the N-terminus, the 328-residue chain is NADH-cytochrome b5 reductase-like protein (328 aa).

Residues 76 to 184 (DKWLEFKLQD…KGPVEKFKYS (109 aa)) form the FAD-binding FR-type domain. The residue at position 201 (Thr201) is a Phosphothreonine.

Belongs to the flavoprotein pyridine nucleotide cytochrome reductase family. The cofactor is FAD.

The protein localises to the mitochondrion. The enzyme catalyses 2 Fe(III)-[cytochrome b5] + NADH = 2 Fe(II)-[cytochrome b5] + NAD(+) + H(+). In terms of biological role, desaturation and elongation of fatty acids. This chain is NADH-cytochrome b5 reductase-like protein (CBR2), found in Arabidopsis thaliana (Mouse-ear cress).